Here is an 811-residue protein sequence, read N- to C-terminus: Exocyst complex component 6B (811 aa).

Positions 50 to 119 (MEKLETRIRN…LVIAMEELKQ (70 aa)) form a coiled coil. Residues 260 to 280 (STSPKSEQDSGILDVEDEEDD) are disordered.

It belongs to the SEC15 family. In terms of assembly, the exocyst complex is composed of SEC3, SEC5, SEC6, SEC8, SEC10, SEC15, EXO70 and EXO84.

Functionally, component of the exocyst complex involved in the docking of exocytic vesicles with fusion sites on the plasma membrane. The chain is Exocyst complex component 6B (EXOC6B) from Homo sapiens (Human).